We begin with the raw amino-acid sequence, 286 residues long: MSASAPEPPRLDLSFVRRGGRTVIDRRLFAWPFVLTRSFHTDGARPDLLSVILQTGSGAVHGEDRLTQRFTLREGAAVSVTTQGATSVHRAEPGARAVEQVQLRVAAGASLDYRPEPRILFPDAALCQVLELDCAADAVALVTDAFTMHDPDGQGRLFRELDSTVIVRRPSQEPLLIDRMQLCDPGTALFKGRRAFGSAVLMLPDMHDRAAIRLRVIDTLAHIDDLYAAASLLPQSVGIGIRLAARELRQLRAGFDAVAALVREIDLGARAAQAPSAAATARPTAA.

The protein belongs to the UreD family. As to quaternary structure, ureD, UreF and UreG form a complex that acts as a GTP-hydrolysis-dependent molecular chaperone, activating the urease apoprotein by helping to assemble the nickel containing metallocenter of UreC. The UreE protein probably delivers the nickel.

The protein resides in the cytoplasm. Its function is as follows. Required for maturation of urease via the functional incorporation of the urease nickel metallocenter. The protein is Urease accessory protein UreD 2 of Bradyrhizobium sp. (strain BTAi1 / ATCC BAA-1182).